We begin with the raw amino-acid sequence, 761 residues long: Cyclin-D-binding Myb-like transcription factor 1 (761 aa).

Residues 1–237 (MSTVEEDSDT…TPEEIEKLKE (237 aa)) form an interaction with CCND2 region. The interval 24–51 (DTDGNLILHCPQNDPDEVDSEDSTEPPH) is disordered. A compositionally biased stretch (acidic residues) spans 37–47 (DPDEVDSEDST). Positions 87–170 (VTMTATTEVA…IDILMNNIER (84 aa)) are required for transcriptional activation. The segment at 87–458 (VTMTATTEVA…DNTAISPSPM (372 aa)) is required for DNA-binding. Residues 176–761 (GIKDATEIIF…KDVEDLVNCH (586 aa)) form an interaction with CCND1, CCND2 and CCND3 region. A Myb-like 1 domain is found at 225–263 (GKYTPEEIEKLKELRIKHGNDWATIGAALGRSASSVKDR). The HTH myb-type domain maps to 268 to 333 (KDTCNTGKWT…KWLNYLNWKQ (66 aa)). The H-T-H motif DNA-binding region spans 306–329 (WAAVAERVGTRSEKQCRSKWLNYL). In terms of domain architecture, Myb-like 2 spans 339 to 388 (WTKEDEINLILRIAELDVADENDINWDLLAEGWSSVRSPQWLRSKWWTIK). Positions 459 to 761 (AALQIPVQIT…KDVEDLVNCH (303 aa)) are required for transcriptional activation. 2 disordered regions span residues 584-625 (SLSQ…MTIQ) and 740-761 (GSSL…VNCH).

It belongs to the DMTF1 family. In terms of assembly, interacts with the D-type cyclins CCND1, CCND2 and CCND3. Interaction with D-type cyclins may modulate transcriptional activation by this protein. Phosphorylated by the cyclin-D2/CDK4, cyclin-D3/CDK4 and cyclin-D2/CDK6 complexes and to a lesser extent by the cyclin-D1/CDK4 complex. In terms of tissue distribution, ubiquitously expressed (at mRNA level). Expressed in brain, intestine, kidney, lung, pancreas, skin, spleen and tongue (at protein level). Expressed at high levels in testis and thymus (at protein level). In all tissues examined, expression is predominant in non-proliferating and differentiated cell types. These include epithelial, interstitial and smooth muscle cells of the intestine, differentiated spermatids, sperm and interstitial cells of the testis, and lymphoid cells of the medullary compartment of the thymus.

The protein resides in the nucleus. Functionally, transcriptional activator which activates the CDKN2A/ARF locus in response to Ras-Raf signaling, thereby promoting p53/TP53-dependent growth arrest. May also cooperate with MYB to activate transcription of the ANPEP gene. Binds to the consensus sequence 5'-CCCG[GT]ATGT-3'. In Mus musculus (Mouse), this protein is Cyclin-D-binding Myb-like transcription factor 1 (Dmtf1).